A 474-amino-acid chain; its full sequence is tRNA (guanine(37)-N(1))-methyltransferase (474 aa).

Residues histidine 234, 274–275, 303–304, and asparagine 345 each bind S-adenosyl-L-methionine; these read DL and DA. Positions 452–464 are enriched in acidic residues; sequence EPEAQCESEEAEE. Residues 452 to 474 are disordered; it reads EPEAQCESEEAEEPSSKRIKVDT. The segment covering 465–474 has biased composition (basic and acidic residues); the sequence is PSSKRIKVDT.

This sequence belongs to the class I-like SAM-binding methyltransferase superfamily. TRM5/TYW2 family. As to quaternary structure, monomer.

It is found in the mitochondrion matrix. It localises to the nucleus. The protein localises to the cytoplasm. The enzyme catalyses guanosine(37) in tRNA + S-adenosyl-L-methionine = N(1)-methylguanosine(37) in tRNA + S-adenosyl-L-homocysteine + H(+). Its function is as follows. Specifically methylates the N1 position of guanosine-37 in various cytoplasmic and mitochondrial tRNAs. Methylation is not dependent on the nature of the nucleoside 5' of the target nucleoside. This is the first step in the biosynthesis of wybutosine (yW), a modified base adjacent to the anticodon of tRNAs and required for accurate decoding. The polypeptide is tRNA (guanine(37)-N(1))-methyltransferase (Caenorhabditis elegans).